We begin with the raw amino-acid sequence, 174 residues long: Repair DNA polymerase X (174 aa).

Positions 42–51 (REEKMLNDVD) are involved in ssDNA binding. Mg(2+) contacts are provided by Asp-49 and Asp-51. An intrachain disulfide couples Cys-81 to Cys-86. Asp-100 is a Mg(2+) binding site.

The protein belongs to the DNA polymerase type-X family. The cofactor is Mg(2+).

Its subcellular location is the virion. It carries out the reaction DNA(n) + a 2'-deoxyribonucleoside 5'-triphosphate = DNA(n+1) + diphosphate. In terms of biological role, error-prone polymerase lacking a proofreading 3'-5' exonuclease which catalyzes the gap-filling reaction during the DNA repair process. Specifically binds intermediates in the single-nucleotide base-excision repair process. Also catalyzes DNA polymerization with low nucleotide-insertion fidelity. Probably acts as a strategic DNA mutase, which gives rise to a rapid emergence of variants. Generates mismatched G-G pairs, in that case, the polymerase first binds the deoxynucleotide followed by mismatch formation. Together with the viral DNA ligase, fills the single nucleotide gaps generated by the AP endonuclease. Binds DNA with high affinity via the helix alphaE. The protein is Repair DNA polymerase X of African swine fever virus (isolate Tick/Malawi/Lil 20-1/1983) (ASFV).